The following is an 835-amino-acid chain: Leucine--tRNA ligase (835 aa).

The 'HIGH' region motif lies at 36 to 46 (PYPSGKIHVGH). The short motif at 602–606 (KMSKS) is the 'KMSKS' region element. An ATP-binding site is contributed by Lys-605.

This sequence belongs to the class-I aminoacyl-tRNA synthetase family.

Its subcellular location is the cytoplasm. It carries out the reaction tRNA(Leu) + L-leucine + ATP = L-leucyl-tRNA(Leu) + AMP + diphosphate. The polypeptide is Leucine--tRNA ligase (Rickettsia felis (strain ATCC VR-1525 / URRWXCal2) (Rickettsia azadi)).